Reading from the N-terminus, the 186-residue chain is Large ribosomal subunit protein uL15 (186 aa).

The interval 1–48 (MDLSSLRPAKGAVKARKRVGRGPGSGNGTTAGKGNKGQQSRSGYQRPV) is disordered. Positions 21-35 (RGPGSGNGTTAGKGN) are enriched in gly residues.

Belongs to the universal ribosomal protein uL15 family. In terms of assembly, part of the 50S ribosomal subunit.

Binds to the 23S rRNA. The chain is Large ribosomal subunit protein uL15 from Chlorobaculum tepidum (strain ATCC 49652 / DSM 12025 / NBRC 103806 / TLS) (Chlorobium tepidum).